The sequence spans 406 residues: MTFSVDKVRADFPVLSREVNGLPLAYLDSAASAQKPSQVIDAEAEFYRHGYAAVHRGIHTLSAQATEKMENVRKRASLFINARSAEELVFVRGTTEGINLVANSWGNSNVRAGDNIIISQMEHHANIVPWQMLCARVGAELRVIPLNPDGTLQLETLPTLFDEKTRLLAITHVSNVLGTENPLVEMITLAHQHGAKVLVDGAQAVMHHPVDVQALDCDFYVFSGHKLYGPTGIGILYVKEALLQEMPPWEGGGSMIATVSLSEGTTWTKAPWRFEAGTPNTGGIIGLGAALEYVSALGLNNIAEYEQNLMHYALSQLESVPDLTLYGPQNRLGVIAFNLGKHHAYDVGSFLDNYGIAVRTGHHCAMPLMAYYNVPAMCRASLAMYNTHEEVDRLVTGLQRIHRLLG.

An N6-(pyridoxal phosphate)lysine modification is found at Lys226. Catalysis depends on Cys364, which acts as the Cysteine persulfide intermediate.

Belongs to the class-V pyridoxal-phosphate-dependent aminotransferase family. Csd subfamily. Homodimer. Interacts with SufE and the SufBCD complex composed of SufB, SufC and SufD. The interaction with SufE is required to mediate the direct transfer of the sulfur atom from the S-sulfanylcysteine. Pyridoxal 5'-phosphate serves as cofactor.

The protein resides in the cytoplasm. The catalysed reaction is (sulfur carrier)-H + L-cysteine = (sulfur carrier)-SH + L-alanine. It carries out the reaction L-selenocysteine + AH2 = hydrogenselenide + L-alanine + A + H(+). The protein operates within cofactor biosynthesis; iron-sulfur cluster biosynthesis. Functionally, cysteine desulfurases mobilize the sulfur from L-cysteine to yield L-alanine, an essential step in sulfur metabolism for biosynthesis of a variety of sulfur-containing biomolecules. Component of the suf operon, which is activated and required under specific conditions such as oxidative stress and iron limitation. Acts as a potent selenocysteine lyase in vitro, that mobilizes selenium from L-selenocysteine. Selenocysteine lyase activity is however unsure in vivo. This Escherichia fergusonii (strain ATCC 35469 / DSM 13698 / CCUG 18766 / IAM 14443 / JCM 21226 / LMG 7866 / NBRC 102419 / NCTC 12128 / CDC 0568-73) protein is Cysteine desulfurase.